The sequence spans 273 residues: Non-homologous end joining protein Ku (273 aa).

A Ku domain is found at 10–193; the sequence is AFGLVNVPVK…KVEIKPAELK (184 aa). The segment at 111–273 is sufficient for interaction with LigD; sequence FLEPDSKSSK…KANSNVPTPP (163 aa).

Belongs to the prokaryotic Ku family. In terms of assembly, homodimer. Interacts with LigD.

Its function is as follows. With LigD forms a non-homologous end joining (NHEJ) DNA repair enzyme, which repairs dsDNA breaks with reduced fidelity. Binds linear dsDNA with 5'- and 3'- overhangs but not closed circular dsDNA nor ssDNA. Recruits and stimulates the ligase activity of LigD. This Mycobacterium tuberculosis (strain CDC 1551 / Oshkosh) protein is Non-homologous end joining protein Ku (mku).